The sequence spans 279 residues: Ribosomal RNA small subunit methyltransferase J (279 aa).

Residues 138 to 139 (ER) and Asp-194 contribute to the S-adenosyl-L-methionine site.

Belongs to the methyltransferase superfamily. RsmJ family.

Its subcellular location is the cytoplasm. The enzyme catalyses guanosine(1516) in 16S rRNA + S-adenosyl-L-methionine = N(2)-methylguanosine(1516) in 16S rRNA + S-adenosyl-L-homocysteine + H(+). In terms of biological role, specifically methylates the guanosine in position 1516 of 16S rRNA. The protein is Ribosomal RNA small subunit methyltransferase J of Acinetobacter baumannii (strain ACICU).